Reading from the N-terminus, the 367-residue chain is tRNA pseudouridine synthase D (367 aa).

D80 acts as the Nucleophile in catalysis. The 161-residue stretch at 156-316 folds into the TRUD domain; that stretch reads GIPNWFGEQR…LKQERRALRL (161 aa).

It belongs to the pseudouridine synthase TruD family.

The catalysed reaction is uridine(13) in tRNA = pseudouridine(13) in tRNA. In terms of biological role, responsible for synthesis of pseudouridine from uracil-13 in transfer RNAs. The sequence is that of tRNA pseudouridine synthase D from Xanthomonas campestris pv. campestris (strain 8004).